The sequence spans 391 residues: Cyclin-B1-2 (391 aa).

The protein belongs to the cyclin family. Cyclin AB subfamily.

This is Cyclin-B1-2 (CYCB1-2) from Oryza sativa subsp. japonica (Rice).